The following is a 72-amino-acid chain: Translation initiation factor IF-1 (72 aa).

Residues 1 to 72 (MSKEDAIEVM…TRGRIVYRYK (72 aa)) enclose the S1-like domain.

It belongs to the IF-1 family. Component of the 30S ribosomal translation pre-initiation complex which assembles on the 30S ribosome in the order IF-2 and IF-3, IF-1 and N-formylmethionyl-tRNA(fMet); mRNA recruitment can occur at any time during PIC assembly.

It localises to the cytoplasm. In terms of biological role, one of the essential components for the initiation of protein synthesis. Stabilizes the binding of IF-2 and IF-3 on the 30S subunit to which N-formylmethionyl-tRNA(fMet) subsequently binds. Helps modulate mRNA selection, yielding the 30S pre-initiation complex (PIC). Upon addition of the 50S ribosomal subunit IF-1, IF-2 and IF-3 are released leaving the mature 70S translation initiation complex. This Koribacter versatilis (strain Ellin345) protein is Translation initiation factor IF-1.